The chain runs to 447 residues: uncharacterized protein (447 aa).

To E.coli plasmid IncP-alpha RP4 protein TraN.

This is an uncharacterized protein from Haemophilus influenzae (strain ATCC 51907 / DSM 11121 / KW20 / Rd).